The primary structure comprises 504 residues: Patatin-like phospholipase domain-containing protein 2 (504 aa).

Topologically, residues 1 to 8 (MFPREKTW) are cytoplasmic. A helical membrane pass occupies residues 9-29 (NISFAGCGFLGVYYVGVASCL). One can recognise a PNPLA domain in the interval 10–179 (ISFAGCGFLG…SDNLPLYELK (170 aa)). The GXGXXG signature appears at 14 to 19 (GCGFLG). At 30–42 (REHAPFLVANATH) the chain is on the extracellular side. The N-linked (GlcNAc...) asparagine glycan is linked to Asn-39. A helical membrane pass occupies residues 43–63 (IYGASAGALTATALVTGVCLG). The short motif at 45–49 (GASAG) is the GXSXG element. The active-site Nucleophile is the Ser-47. Residues 64-137 (EAGAKFIEVS…IISHFNSKDE (74 aa)) are Cytoplasmic-facing. Lys-92 participates in a covalent cross-link: Glycyl lysine isopeptide (Lys-Gly) (interchain with G-Cter in ubiquitin). A helical transmembrane segment spans residues 138–158 (LIQANVCSGFIPVYCGLIPPS). The Extracellular segment spans residues 159–329 (LQGVRYVDGG…TTLSNMLPVR (171 aa)). Asp-166 functions as the Proton acceptor in the catalytic mechanism. A DGA/G motif is present at residues 166–168 (DGG). Residues 330 to 350 (LATAMMVPYTLPLESALSFTI) traverse the membrane as a helical segment. The Cytoplasmic segment spans residues 351-504 (RLLEWLPDVP…ARPVIGALGL (154 aa)). Ser-372 is modified (phosphoserine; in vitro). Residue Ser-404 is modified to Phosphoserine; by PKA and FAM20C. Phosphoserine is present on Ser-428. Residues 463-492 (APADPAPAPADPASPQHQLAGPAPLLSTPA) are disordered.

As to quaternary structure, interacts with ABHD5; this association stimulates PNPLA2 triglyceride hydrolase activity. Interacts with SERPINF1; this interaction stimulates the phospholipase A2 activity of PNPLA2. Despite a colocalization in lipid droplets, it probably does not interact with PLIN. Interacts with PLIN5; prevents interaction with ABHD5. Interacts with FAF2. Phosphorylation at Ser-404 by PKA is increased during fasting and moderate intensity exercise, and moderately increases lipolytic activity. Phosphorylation at Ser-404 is increased upon beta-adrenergic stimulation. In terms of processing, ubiquitinated by PEX2 in response to reactive oxygen species (ROS), leading to its degradation. Ubiquitination is stimulated by LDAH. As to expression, highest expression in adipose tissue. Also detected in heart, skeletal muscle, and portions of the gastrointestinal tract. Detected in normal retina and retinoblastoma cells. Detected in retinal pigment epithelium and, at lower intensity, in the inner segments of photoreceptors and in the ganglion cell layer of the neural retina (at protein level).

The protein resides in the lipid droplet. It localises to the cell membrane. Its subcellular location is the cytoplasm. The enzyme catalyses a triacylglycerol + H2O = a diacylglycerol + a fatty acid + H(+). The catalysed reaction is a triacylglycerol + H2O = a 1,2-diacylglycerol + a fatty acid + H(+). It catalyses the reaction a triacylglycerol + H2O = a 1,3-diacylglycerol + a fatty acid + H(+). It carries out the reaction a triacyl-sn-glycerol + H2O = a 1,3-diacyl-sn-glycerol + a fatty acid + H(+). The enzyme catalyses a triacyl-sn-glycerol + H2O = a 2,3-diacyl-sn-glycerol + a fatty acid + H(+). The catalysed reaction is a 1-acylglycerol + a 1,3-diacylglycerol = a triacylglycerol + glycerol. It catalyses the reaction a 1-acylglycerol + a 1,2-diacylglycerol = a triacylglycerol + glycerol. It carries out the reaction 2 a 1-acylglycerol = a 1,2-diacylglycerol + glycerol. The enzyme catalyses a triacylglycerol + all-trans-retinol = an all-trans-retinyl ester + a diacylglycerol. The catalysed reaction is 1,2-di-(9Z-octadecenoyl)-glycerol + (9Z)-octadecenoate + H(+) = 1,2,3-tri-(9Z-octadecenoyl)-glycerol + H2O. It catalyses the reaction 1,2,3-tri-(9Z-octadecenoyl)-glycerol + H2O = 1,3-di-(9Z-octadecenoyl)-glycerol + (9Z)-octadecenoate + H(+). It carries out the reaction 1-(9Z-octadecenoyl)-glycerol + 1,3-di-(9Z-octadecenoyl)-glycerol = 1,2,3-tri-(9Z-octadecenoyl)-glycerol + glycerol. The enzyme catalyses 1-(9Z-octadecenoyl)-glycerol + 1,2-di-(9Z-octadecenoyl)-glycerol = 1,2,3-tri-(9Z-octadecenoyl)-glycerol + glycerol. The catalysed reaction is 2 1-(9Z-octadecenoyl)-glycerol = 1,2-di-(9Z-octadecenoyl)-glycerol + glycerol. It catalyses the reaction 1,2,3-tri-(9Z-octadecenoyl)-glycerol + all-trans-retinol = all-trans-retinyl 9Z-octadecenoate + di-(9Z)-octadecenoylglycerol. It carries out the reaction 1,2,3-tri-(9Z)-hexadecenoylglycerol + H2O = 1,3-di-(9Z)-hexadecenoylglycerol + (9Z)-hexadecenoate + H(+). The enzyme catalyses 1,2,3-tri-(9Z,12Z)-octadecadienoylglycerol + H2O = 1,3-di-(9Z,12Z)-octadecadienoylglycerol + (9Z,12Z)-octadecadienoate + H(+). The catalysed reaction is 1,2,3-tri-(9Z,12Z,15Z)-octadecatrienoylglycerol + H2O = 1,3-di-(9Z,12Z,15Z)-octadecatrienoylglycerol + (9Z,12Z,15Z)-octadecatrienoate + H(+). It catalyses the reaction 1,3-di-(9Z)-octadecenoyl-2-hexadecanoylglycerol + H2O = 1,3-di-(9Z-octadecenoyl)-glycerol + hexadecanoate + H(+). It carries out the reaction 1,2-di-(9Z)-octadecenoyl-3-hexadecanoyl-sn-glycerol + H2O = 1-(9Z)-octadecenoyl-3-hexadecanoyl-sn-glycerol + (9Z)-octadecenoate + H(+). The enzyme catalyses 1-hexadecanoyl-2,3-di-(9Z)-octadecenoyl-sn-glycerol + H2O = 1-hexadecanoyl-3-(9Z)-octadecenoyl-sn-glycerol + (9Z)-octadecenoate + H(+). The catalysed reaction is 1,2,3-tri-(9Z-octadecenoyl)-glycerol + H2O = 2,3-di-(9Z)-octadecenoyl-sn-glycerol + (9Z)-octadecenoate + H(+). It catalyses the reaction 1,2,3-tri-(9Z)-hexadecenoylglycerol + H2O = 2,3-di-(9Z)-hexadecenoyl-sn-glycerol + (9Z)-hexadecenoate + H(+). It carries out the reaction 1,2,3-tri-(9Z,12Z)-octadecadienoylglycerol + H2O = 2,3-di-(9Z,12Z)-octadecadienoyl-sn-glycerol + (9Z,12Z)-octadecadienoate + H(+). The enzyme catalyses 1,2,3-tri-(9Z,12Z,15Z)-octadecatrienoylglycerol + H2O = 2,3-di-(9Z,12Z,15Z)-octadecatrienoyl-sn-glycerol + (9Z,12Z,15Z)-octadecatrienoate + H(+). The catalysed reaction is 1,3-di-(9Z)-octadecenoyl-2-hexadecanoylglycerol + H2O = 2-hexadecanoyl-3-(9Z)-octadecenoyl-sn-glycerol + (9Z)-octadecenoate + H(+). It catalyses the reaction 1-hexadecanoyl-2,3-di-(9Z)-octadecenoyl-sn-glycerol + H2O = 2,3-di-(9Z)-octadecenoyl-sn-glycerol + hexadecanoate + H(+). It carries out the reaction 1,2-di-(9Z)-octadecenoyl-3-hexadecanoyl-sn-glycerol + H2O = 2-(9Z-octadecenoyl)-3-hexadecanoyl-sn-glycerol + (9Z)-octadecenoate + H(+). The enzyme catalyses a 1,2-diacyl-sn-glycero-3-phosphocholine + H2O = a 1-acyl-sn-glycero-3-phosphocholine + a fatty acid + H(+). The catalysed reaction is 1,2,3-tri-(9Z-octadecenoyl)-glycerol + 9-hydroxy-octadecanoate = 9-(9Z-octadecenoyloxy)-octadecanoate + 2,3-di-(9Z)-octadecenoyl-sn-glycerol. It catalyses the reaction 1-hexadecanoyl-2,3-di-(9Z)-octadecenoyl-sn-glycerol + 9-hydroxy-octadecanoate = 9-hexadecanoyloxy-octadecanoate + 2,3-di-(9Z)-octadecenoyl-sn-glycerol. It carries out the reaction 1,2,3-tri-(10Z)-heptadecenoylglycerol + 9-hydroxy-octadecanoate = 2,3-di-(10Z-heptadecenoyl)-sn-glycerol + 9-(10Z-heptadecenoyloxy)-octadecanoate. The enzyme catalyses 1,2,3-tri-(9Z,12Z)-octadecadienoylglycerol + 9-hydroxy-octadecanoate = 2,3-di-(9Z,12Z)-octadecadienoyl-sn-glycerol + 9-(9Z,12Z-octadecadienoyloxy)-octadecanoate. The catalysed reaction is 1,2,3-tri-(9Z)-hexadecenoylglycerol + 9-hydroxy-octadecanoate = 2,3-di-(9Z)-hexadecenoyl-sn-glycerol + 9-(9Z-hexadecenoyloxy)-octadecanoate. It catalyses the reaction 9-hydroxy-octadecanoate + 1,2-di-(9Z-octadecenoyl)-sn-glycerol = 9-(9Z-octadecenoyloxy)-octadecanoate + 2-(9Z-octadecenoyl)-glycerol. It carries out the reaction 1-hexadecanoyl-2,3-di-(9Z)-octadecenoyl-sn-glycerol + 9-hydroxy-octadecanoate = 1-hexadecanoyl-3-(9Z)-octadecenoyl-sn-glycerol + 9-(9Z-octadecenoyloxy)-octadecanoate. It functions in the pathway glycerolipid metabolism; triacylglycerol degradation. With respect to regulation, the triglyceride lipase activity is inhibited by BEL ((E)-6-(bromomethylene)-3-(1-naphthalenyl)-2H-tetrahydropyran-2-one), a suicide substrate inhibitor. No differences in the acylglycerol transacylase was detected in the presence or absence of ATP. Its function is as follows. Catalyzes the initial step in triglyceride hydrolysis in adipocyte and non-adipocyte lipid droplets. Exhibits a strong preference for the hydrolysis of long-chain fatty acid esters at the sn-2 position of the glycerol backbone and acts coordinately with LIPE/HLS and DGAT2 within the lipolytic cascade. Also possesses acylglycerol transacylase and phospholipase A2 activities. Transfers fatty acid from triglyceride to retinol, hydrolyzes retinylesters, and generates 1,3-diacylglycerol from triglycerides. Regulates adiposome size and may be involved in the degradation of adiposomes. Catalyzes the formation of an ester bond between hydroxy fatty acids and fatty acids derived from triglycerides or diglycerides to generate fatty acid esters of hydroxy fatty acids (FAHFAs) in adipocytes. Acts antagonistically with LDAH in regulation of cellular lipid stores. Inhibits LDAH-stimulated lipid droplet fusion. May play an important role in energy homeostasis. May play a role in the response of the organism to starvation, enhancing hydrolysis of triglycerides and providing free fatty acids to other tissues to be oxidized in situations of energy depletion. This is Patatin-like phospholipase domain-containing protein 2 from Homo sapiens (Human).